We begin with the raw amino-acid sequence, 414 residues long: tRNA methyltransferase 10 homolog C (414 aa).

The transit peptide at 1 to 35 directs the protein to the mitochondrion; sequence MNVTVRFLRPFARCLVPYTFHRKRSHLYSGVLQRY. Ser79 carries the phosphoserine modification. Residues 133 to 171 adopt a coiled-coil conformation; it reads GKEKAKKAKQVKKEMKAEAREEAKRARLLETTAEEQQQD. The SAM-dependent MTase TRM10-type domain occupies 186-378; the sequence is LGWKGVQAMQ…KFVPRRKHTG (193 aa).

Belongs to the class IV-like SAM-binding methyltransferase superfamily. TRM10 family. Component of mitochondrial ribonuclease P, a complex composed of TRMT10C/MRPP1, HSD17B10/MRPP2 and PRORP/MRPP3. Interacts with HSD17B10/MRPP2; forming the MRPP1-MRPP2 subcomplex of the mitochondrial ribonuclease P complex. Interacts with GRSF1.

The protein resides in the mitochondrion matrix. It is found in the mitochondrion nucleoid. It carries out the reaction adenosine(9) in tRNA + S-adenosyl-L-methionine = N(1)-methyladenosine(9) in tRNA + S-adenosyl-L-homocysteine + H(+). It catalyses the reaction guanosine(9) in tRNA + S-adenosyl-L-methionine = N(1)-methylguanosine(9) in tRNA + S-adenosyl-L-homocysteine + H(+). The enzyme catalyses an adenosine in mRNA + S-adenosyl-L-methionine = an N(1)-methyladenosine in mRNA + S-adenosyl-L-homocysteine + H(+). Mitochondrial tRNA N(1)-methyltransferase involved in mitochondrial tRNA maturation. Component of mitochondrial ribonuclease P, a complex composed of TRMT10C/MRPP1, HSD17B10/MRPP2 and PRORP/MRPP3, which cleaves tRNA molecules in their 5'-ends. Together with HSD17B10/MRPP2, forms a subcomplex of the mitochondrial ribonuclease P, named MRPP1-MRPP2 subcomplex, which displays functions that are independent of the ribonuclease P activity. The MRPP1-MRPP2 subcomplex catalyzes the formation of N(1)-methylguanine and N(1)-methyladenine at position 9 (m1G9 and m1A9, respectively) in tRNAs; TRMT10C/MRPP1 acting as the catalytic N(1)-methyltransferase subunit. The MRPP1-MRPP2 subcomplex also acts as a tRNA maturation platform: following 5'-end cleavage by the mitochondrial ribonuclease P complex, the MRPP1-MRPP2 subcomplex enhances the efficiency of 3'-processing catalyzed by ELAC2, retains the tRNA product after ELAC2 processing and presents the nascent tRNA to the mitochondrial CCA tRNA nucleotidyltransferase TRNT1 enzyme. In addition to tRNA N(1)-methyltransferase activity, TRMT10C/MRPP1 also acts as a mRNA N(1)-methyltransferase by mediating methylation of adenosine residues at the N(1) position of MT-ND5 mRNA. Associates with mitochondrial DNA complexes at the nucleoids to initiate RNA processing and ribosome assembly. The protein is tRNA methyltransferase 10 homolog C of Mus musculus (Mouse).